The primary structure comprises 516 residues: Bifunctional purine biosynthesis protein PurH (516 aa).

Residues methionine 1–threonine 149 form the MGS-like domain.

Belongs to the PurH family.

The catalysed reaction is (6R)-10-formyltetrahydrofolate + 5-amino-1-(5-phospho-beta-D-ribosyl)imidazole-4-carboxamide = 5-formamido-1-(5-phospho-D-ribosyl)imidazole-4-carboxamide + (6S)-5,6,7,8-tetrahydrofolate. It carries out the reaction IMP + H2O = 5-formamido-1-(5-phospho-D-ribosyl)imidazole-4-carboxamide. Its pathway is purine metabolism; IMP biosynthesis via de novo pathway; 5-formamido-1-(5-phospho-D-ribosyl)imidazole-4-carboxamide from 5-amino-1-(5-phospho-D-ribosyl)imidazole-4-carboxamide (10-formyl THF route): step 1/1. It functions in the pathway purine metabolism; IMP biosynthesis via de novo pathway; IMP from 5-formamido-1-(5-phospho-D-ribosyl)imidazole-4-carboxamide: step 1/1. The chain is Bifunctional purine biosynthesis protein PurH from Cutibacterium acnes (strain DSM 16379 / KPA171202) (Propionibacterium acnes).